A 345-amino-acid polypeptide reads, in one-letter code: RING finger protein 228 (345 aa).

Low complexity predominate over residues 1–21 (MAAPASDSGGSQQSPSSSPGS). The interval 1-43 (MAAPASDSGGSQQSPSSSPGSREGAGVAAKGAPDCGDAGARDA) is disordered. Residues 58 to 125 (CKICYNYFDA…PGAIACPVCR (68 aa)) form an RING-type zinc finger. Residues 159 to 213 (LPQDRLPPLPARLPAPAAAPPPTPAPPPPPSPAPPQPPPPPPAEDAAPGPRARPG) form a disordered region. Positions 163–201 (RLPPLPARLPAPAAAPPPTPAPPPPPSPAPPQPPPPPPA) are enriched in pro residues. Positions 202–213 (EDAAPGPRARPG) are enriched in low complexity. A run of 2 helical transmembrane segments spans residues 236 to 256 (VCVV…LIFV) and 290 to 310 (LSVA…ICWL). Residues 319–345 (AGSTGGSGGGGGPRARAAAGGARRSDT) form a disordered region. Residues 321 to 331 (STGGSGGGGGP) show a composition bias toward gly residues. A compositionally biased stretch (low complexity) spans 332-345 (RARAAAGGARRSDT).

It is found in the membrane. The protein is RING finger protein 228 of Homo sapiens (Human).